Consider the following 147-residue polypeptide: Deoxyuridine 5'-triphosphate nucleotidohydrolase (147 aa).

Substrate-binding positions include 63–65 (RSG), Asn76, and 80–82 (TID).

The protein belongs to the dUTPase family. Requires Mg(2+) as cofactor.

The enzyme catalyses dUTP + H2O = dUMP + diphosphate + H(+). It functions in the pathway pyrimidine metabolism; dUMP biosynthesis; dUMP from dCTP (dUTP route): step 2/2. Its function is as follows. This enzyme is involved in nucleotide metabolism: it produces dUMP, the immediate precursor of thymidine nucleotides and it decreases the intracellular concentration of dUTP so that uracil cannot be incorporated into DNA. The polypeptide is Deoxyuridine 5'-triphosphate nucleotidohydrolase (Chlamydia caviae (strain ATCC VR-813 / DSM 19441 / 03DC25 / GPIC) (Chlamydophila caviae)).